The primary structure comprises 612 residues: MVVSYNNNNNNNNNNNNNNISNNNNNNNMFPPFPSSDDFAMYQQSSSSGPYQETYASGPQNFGDAVYPMNGNFTLLPSDFTREPNDSFFYENDGIFDYQRIQQQPTQFQTKQRNDSQQQRFSQEQNFEIDNEVVHNNNRYYEYERSSNEVSPFDDENPNVLSDGMSPTIMATATAVTNANAPLPVNAQANNPLNFTSAPSRTVYLGNVPPNLSVKELLDHVRSGVVEDVKIIPEKMCAFVSFIDESAALLFHSDAILKRLNIGDRDIKIGWGKPTRIDPIVAARISTDGATRNVYIGRMTIEGEESHLSEEQLRVDLEEYGEIDCIKIIKEKGIAFIHFASILNAIKVVTNLPIRNPYYQNKRIFYGKDRCAFITKTQQHNAAQFLGVQPGMEHMIEFSDREFISNALLQQSAAAAAIATSAGGPNNLGNRTVYLGSLPKDVKIEEICNAVRGGLLQSIKLLNDRYVCFVTFIDPTAAAQFYAMSSLYGFTVQKKRCKVGWGKHSGPLPNALALAVSNGASRNVYVGNIDFVGDSLRDERVFTESNLRHIFQQYGEVEQINFLPEKNCCFINYTNISNAILALDKIKSNPYFKDLKINFGKDRCGNVPHQSR.

Over residues 1–28 (MVVSYNNNNNNNNNNNNNNISNNNNNNN) the composition is skewed to low complexity. 2 disordered regions span residues 1–57 (MVVS…TYAS) and 105–125 (PTQF…SQEQ). Composition is skewed to polar residues over residues 42-57 (YQQS…TYAS) and 115-125 (DSQQQRFSQEQ). 4 consecutive RRM domains span residues 201 to 274 (RTVY…WGKP), 292 to 379 (RNVY…KTQQ), 431 to 504 (RTVY…WGKH), and 522 to 602 (RNVY…FGKD).

It localises to the cytoplasm. In terms of biological role, RNA-binding protein that binds specific categories of mRNAs, including those that contain upstream open reading frames (uORFs) and internal ribosome entry sites (IRES). Probably involved in translational regulation. In Saccharomyces cerevisiae (strain ATCC 204508 / S288c) (Baker's yeast), this protein is RNA-binding protein MRN1 (MRN1).